A 125-amino-acid chain; its full sequence is MNRLYQNCMFLYVYTDVCVRLCASIFYIMLEAKFALRIPALRPSYTWGQWRSFIQSSFYGRTFVAFSGPSMKNYITICFLLKSIEVSVDRTALHGTSAEASASNFQRIQTKNLSKYNCNIPACCV.

Residues 7 to 29 (NCMFLYVYTDVCVRLCASIFYIM) traverse the membrane as a helical segment.

It is found in the membrane. This is an uncharacterized protein from Saccharomyces cerevisiae (strain ATCC 204508 / S288c) (Baker's yeast).